A 282-amino-acid polypeptide reads, in one-letter code: uncharacterized protein (282 aa).

It belongs to the ycf80 family.

The protein localises to the plastid. The protein resides in the chloroplast. This is an uncharacterized protein from Guillardia theta (Cryptophyte).